Here is a 242-residue protein sequence, read N- to C-terminus: Type III pantothenate kinase (242 aa).

An ATP-binding site is contributed by 6–13 (DIGNSVAK). Residues Tyr-86 and 93 to 96 (GMDR) contribute to the substrate site. Asp-95 functions as the Proton acceptor in the catalytic mechanism. Asp-116 lines the K(+) pocket. Residue Thr-119 coordinates ATP. Thr-171 is a binding site for substrate.

Belongs to the type III pantothenate kinase family. In terms of assembly, homodimer. The cofactor is NH4(+). It depends on K(+) as a cofactor.

The protein localises to the cytoplasm. It carries out the reaction (R)-pantothenate + ATP = (R)-4'-phosphopantothenate + ADP + H(+). The protein operates within cofactor biosynthesis; coenzyme A biosynthesis; CoA from (R)-pantothenate: step 1/5. In terms of biological role, catalyzes the phosphorylation of pantothenate (Pan), the first step in CoA biosynthesis. This is Type III pantothenate kinase from Phocaeicola vulgatus (strain ATCC 8482 / DSM 1447 / JCM 5826 / CCUG 4940 / NBRC 14291 / NCTC 11154) (Bacteroides vulgatus).